The sequence spans 239 residues: Glucosamine-6-phosphate deaminase (239 aa).

Aspartate 62 functions as the Proton acceptor; for enolization step in the catalytic mechanism. Asparagine 128 functions as the For ring-opening step in the catalytic mechanism. The active-site Proton acceptor; for ring-opening step is the histidine 130. The active-site For ring-opening step is the glutamate 135.

The protein belongs to the glucosamine/galactosamine-6-phosphate isomerase family. NagB subfamily.

The catalysed reaction is alpha-D-glucosamine 6-phosphate + H2O = beta-D-fructose 6-phosphate + NH4(+). It participates in amino-sugar metabolism; N-acetylneuraminate degradation; D-fructose 6-phosphate from N-acetylneuraminate: step 5/5. In terms of biological role, catalyzes the reversible isomerization-deamination of glucosamine 6-phosphate (GlcN6P) to form fructose 6-phosphate (Fru6P) and ammonium ion. This Lactobacillus helveticus (strain DPC 4571) protein is Glucosamine-6-phosphate deaminase.